Consider the following 145-residue polypeptide: 3-dehydroquinate dehydratase (145 aa).

Y22 (proton acceptor) is an active-site residue. Residues N73, H79, and D86 each coordinate substrate. Residue H99 is the Proton donor of the active site. Substrate-binding positions include L100–S101 and R110.

This sequence belongs to the type-II 3-dehydroquinase family. Homododecamer.

It catalyses the reaction 3-dehydroquinate = 3-dehydroshikimate + H2O. The protein operates within metabolic intermediate biosynthesis; chorismate biosynthesis; chorismate from D-erythrose 4-phosphate and phosphoenolpyruvate: step 3/7. In terms of biological role, catalyzes a trans-dehydration via an enolate intermediate. The chain is 3-dehydroquinate dehydratase from Prochlorococcus marinus (strain NATL1A).